Reading from the N-terminus, the 208-residue chain is Putative proteasome subunit alpha type-4-B (208 aa).

The protein belongs to the peptidase T1A family. Component of the 20S core complex of the 26S proteasome. The 26S proteasome is composed of a core protease (CP), known as the 20S proteasome, capped at one or both ends by the 19S regulatory particle (RP/PA700). The 20S proteasome core is composed of 28 subunits that are arranged in four stacked rings, resulting in a barrel-shaped structure. The two end rings are each formed by seven alpha subunits, and the two central rings are each formed by seven beta subunits. The catalytic chamber with the active sites is on the inside of the barrel.

It is found in the cytoplasm. It localises to the nucleus. Functionally, the proteasome is a multicatalytic proteinase complex which is characterized by its ability to cleave peptides with Arg, Phe, Tyr, Leu, and Glu adjacent to the leaving group at neutral or slightly basic pH. The proteasome has an ATP-dependent proteolytic activity. This is Putative proteasome subunit alpha type-4-B (PAC2) from Arabidopsis thaliana (Mouse-ear cress).